Reading from the N-terminus, the 301-residue chain is MSDISTTLAGIKLVNPFMVASGILDENGYTMKELLERGAAAVVTKSIGISERDGYPTPVIVEYGDSLINAVGLSNPGIENFGEEINIAKEAKRPIIGSVFAYNAEEFTKLSVKMEEYGVDAIELNLSCPHVKGFGLEVGSDPDLVEDIVNEIKSKVKVPVFAKLSPNVSNIIEIAKAAEKADAYVLINTVKAMAIDIYSRSPVLSNLYGGLSGPAIKPVGIRYVYEVKKETGKEIIGVGGISNYKDAIEYIMAGASAVQIGTALYKYGKGIFREMEWQLRTFMDEERFEKIEEMVGVAIKR.

FMN is bound by residues Ser-21 and 45 to 46 (KS). Residues Lys-45, 69 to 73 (NAVGL), and Asn-125 each bind substrate. FMN is bound at residue Asn-125. The active-site Nucleophile is the Cys-128. Lys-163 and Ile-187 together coordinate FMN. Residue 188-189 (NT) participates in substrate binding. Residues Gly-213, 239–240 (GG), and 261–262 (GT) each bind FMN.

The protein belongs to the dihydroorotate dehydrogenase family. Type 1 subfamily. As to quaternary structure, heterotetramer of 2 PyrK and 2 PyrD type B subunits. Requires FMN as cofactor.

It localises to the cytoplasm. It catalyses the reaction (S)-dihydroorotate + NAD(+) = orotate + NADH + H(+). It participates in pyrimidine metabolism; UMP biosynthesis via de novo pathway; orotate from (S)-dihydroorotate (NAD(+) route): step 1/1. Catalyzes the conversion of dihydroorotate to orotate with NAD(+) as electron acceptor. The sequence is that of Dihydroorotate dehydrogenase B (NAD(+)), catalytic subunit (pyrD) from Thermoplasma volcanium (strain ATCC 51530 / DSM 4299 / JCM 9571 / NBRC 15438 / GSS1).